Consider the following 208-residue polypeptide: Dual specificity protein phosphatase 22-A (208 aa).

A Tyrosine-protein phosphatase domain is found at 4-144 (GMNKVIDGLY…LQEFQMKQVS (141 aa)). Cys88 acts as the Phosphocysteine intermediate in catalysis.

Belongs to the protein-tyrosine phosphatase family. Non-receptor class dual specificity subfamily.

It localises to the cytoplasm. The protein localises to the nucleus. It catalyses the reaction O-phospho-L-tyrosyl-[protein] + H2O = L-tyrosyl-[protein] + phosphate. It carries out the reaction O-phospho-L-seryl-[protein] + H2O = L-seryl-[protein] + phosphate. The enzyme catalyses O-phospho-L-threonyl-[protein] + H2O = L-threonyl-[protein] + phosphate. Functionally, activates the Jnk signaling pathway. Dephosphorylates and deactivates p38 and stress-activated protein kinase/c-Jun N-terminal kinase (SAPK/JNK). The polypeptide is Dual specificity protein phosphatase 22-A (Danio rerio (Zebrafish)).